We begin with the raw amino-acid sequence, 380 residues long: Actinidain (380 aa).

An N-terminal signal peptide occupies residues 1-24; sequence MGLPKSFVSMSLLFFSTLLILSLA. The propeptide at 25–126 is activation peptide; sequence FNAKNLTQRT…NQYEPRVGQV (102 aa). 3 cysteine pairs are disulfide-bonded: C148–C191, C182–C224, and C282–C332. C151 is a catalytic residue. An E64-binding site is contributed by C151. Active-site residues include H288 and N308.

It belongs to the peptidase C1 family. In terms of tissue distribution, fruit.

It catalyses the reaction Specificity close to that of papain.. With respect to regulation, repressed by the active-site-directed cysteine protease inhibitor E64 (L-trans-epoxysuccinyl-leucylamide-(4-guanido)-butane) produced by Aspergillus japonicus. Functionally, cysteine protease responsible for the cleavage of kiwellin into kissper and KiTH. The sequence is that of Actinidain from Actinidia chinensis var. chinensis (Chinese soft-hair kiwi).